An 87-amino-acid chain; its full sequence is Cell division protein ZapA (87 aa).

Positions 64–87 form a coiled coil; that stretch reads VHDYIKLKEEYDRLLQKLHKEKDE.

Belongs to the ZapA family. Type 2 subfamily. Homodimer. Interacts with FtsZ.

It localises to the cytoplasm. Functionally, activator of cell division through the inhibition of FtsZ GTPase activity, therefore promoting FtsZ assembly into bundles of protofilaments necessary for the formation of the division Z ring. It is recruited early at mid-cell but it is not essential for cell division. The chain is Cell division protein ZapA from Geobacillus sp. (strain WCH70).